The following is a 263-amino-acid chain: Protein YpjB (263 aa).

Acidic residues predominate over residues 233 to 244 (DFDDSSSEDDPV). Residues 233–263 (DFDDSSSEDDPVENSPVVTSPVVSSSKSSFQ) are disordered. Residues 245-263 (ENSPVVTSPVVSSSKSSFQ) show a composition bias toward low complexity.

This Escherichia coli (strain K12) protein is Protein YpjB (ypjB).